We begin with the raw amino-acid sequence, 408 residues long: RNA exonuclease 4 (408 aa).

Positions T27–M70 are disordered. Positions S40–R55 are enriched in low complexity. The region spanning Q131–R292 is the Exonuclease domain. Positions P310 to K322 are enriched in basic and acidic residues. Positions P310–A408 are disordered. Positions G343 to K357 are enriched in gly residues. Residues Q372 to S384 are compositionally biased toward basic and acidic residues.

The protein belongs to the REXO4 family.

The protein resides in the nucleus. In terms of biological role, exoribonuclease involved in ribosome biosynthesis. Involved in the processing of ITS1, the internal transcribed spacer localized between the 18S and 5.8S rRNAs. This Cryptococcus neoformans var. neoformans serotype D (strain B-3501A) (Filobasidiella neoformans) protein is RNA exonuclease 4 (REX4).